Reading from the N-terminus, the 540-residue chain is Esterase B1 (540 aa).

Cysteines 68 and 81 form a disulfide. S191 serves as the catalytic Acyl-ester intermediate. Residues E324 and H442 each act as charge relay system in the active site. Residue N452 is glycosylated (N-linked (GlcNAc...) asparagine).

Belongs to the type-B carboxylesterase/lipase family.

It carries out the reaction a carboxylic ester + H2O = an alcohol + a carboxylate + H(+). In terms of biological role, overproduction of nonspecific esterases is a common mechanism of resistance to organophosphate insecticides. The protein is Esterase B1 (B1) of Culex pipiens (House mosquito).